Reading from the N-terminus, the 465-residue chain is Beta-1,2-xylosyltransferase XYXT1 (465 aa).

Residues 1 to 11 lie on the Cytoplasmic side of the membrane; that stretch reads MKAAVRSKKSK. A helical; Signal-anchor for type II membrane protein membrane pass occupies residues 12 to 32; that stretch reads GSFCHPPLLLLIVAIQFLVIY. The Lumenal portion of the chain corresponds to 33–465; sequence SPTLDQYMVM…VLLKALHLLR (433 aa). 5 N-linked (GlcNAc...) asparagine glycosylation sites follow: N80, N118, N125, N266, and N403.

Belongs to the glycosyltransferase 61 family. In terms of tissue distribution, widely expressed.

It is found in the golgi apparatus membrane. Its pathway is glycan metabolism. Functionally, glycosyltransferase involved in the xylosylation of xylan, the major hemicellulose (non-cellulosic component) of primary and secondary walls of angiosperms. Possesses beta-1,2-xylosyltransferase activity, transferring xylose from UDP-xylose to the xylan backbone. Catalyzes the addition of 2-O-xylosyl side chains to the xylan backbone. The sequence is that of Beta-1,2-xylosyltransferase XYXT1 from Oryza sativa subsp. japonica (Rice).